The chain runs to 525 residues: GMP synthase [glutamine-hydrolyzing] (525 aa).

A Glutamine amidotransferase type-1 domain is found at 9–207 (RILILDFGSQ…VRDICQCEAL (199 aa)). The active-site Nucleophile is Cys86. Catalysis depends on residues His181 and Glu183. In terms of domain architecture, GMPS ATP-PPase spans 208-400 (WTPAKIIDDA…LGLPYDMLYR (193 aa)). 235 to 241 (SGGVDSS) lines the ATP pocket.

In terms of assembly, homodimer.

The enzyme catalyses XMP + L-glutamine + ATP + H2O = GMP + L-glutamate + AMP + diphosphate + 2 H(+). The protein operates within purine metabolism; GMP biosynthesis; GMP from XMP (L-Gln route): step 1/1. In terms of biological role, catalyzes the synthesis of GMP from XMP. The protein is GMP synthase [glutamine-hydrolyzing] of Klebsiella pneumoniae (strain 342).